Reading from the N-terminus, the 860-residue chain is Leucine--tRNA ligase (860 aa).

A 'HIGH' region motif is present at residues 73 to 83 (VLQPIGWDAFG). A 'KMSKS' region motif is present at residues 650-654 (SPADM). Asp653 is a binding site for ATP.

This sequence belongs to the class-I aminoacyl-tRNA synthetase family.

It localises to the cytoplasm. The enzyme catalyses tRNA(Leu) + L-leucine + ATP = L-leucyl-tRNA(Leu) + AMP + diphosphate. In Shigella flexneri, this protein is Leucine--tRNA ligase.